Consider the following 170-residue polypeptide: Ribosome maturation factor RimM (170 aa).

The region spanning Glu95–Met168 is the PRC barrel domain.

The protein belongs to the RimM family. In terms of assembly, binds ribosomal protein uS19.

The protein resides in the cytoplasm. An accessory protein needed during the final step in the assembly of 30S ribosomal subunit, possibly for assembly of the head region. Essential for efficient processing of 16S rRNA. May be needed both before and after RbfA during the maturation of 16S rRNA. It has affinity for free ribosomal 30S subunits but not for 70S ribosomes. The protein is Ribosome maturation factor RimM of Oceanobacillus iheyensis (strain DSM 14371 / CIP 107618 / JCM 11309 / KCTC 3954 / HTE831).